A 227-amino-acid chain; its full sequence is MAGKTYINNRDNDLSEGLKQLASYLNIPTGVIQAFKSECFVRRYNKGQIIYYSSDQPTYVYLLLDGIVLRETINEDGDAYRKLNKEQLLFPLNHLFRKIELNEMCTAITPCNVIGIPKDMLEYLCKNHDDIFVTLFEKLNNELELLMEYNMALTTKLARERIEKVLYYLCHAIGYDQDEFYEIKHIMTIQLLSDLAGISRETTGHIVHELKEEKKLIKNGKNWMVIK.

41-130 (VRRYNKGQII…LEYLCKNHDD (90 aa)) lines the a nucleoside 3',5'-cyclic phosphate pocket. The HTH crp-type domain occupies 156–227 (KLARERIEKV…KNGKNWMVIK (72 aa)). Positions 189 to 208 (IQLLSDLAGISRETTGHIVH) form a DNA-binding region, H-T-H motif.

It localises to the cytoplasm. Functionally, positively regulates the expression of the arcABDCR operon under anaerobic conditions, thus playing an essential role in arginine catabolism. May also control the expression of genes encoding proteins which are involved in anaerobic metabolism. Can bind cyclic AMP. This Staphylococcus haemolyticus (strain JCSC1435) protein is HTH-type transcriptional regulator ArcR (arcR).